The following is a 320-amino-acid chain: Cytochrome f (320 aa).

The N-terminal stretch at 1–35 is a signal peptide; that stretch reads MQIRNTFSSLKGEITRFISVSLMIYIITRASISNA. Heme is bound by residues Tyr-36, Cys-56, Cys-59, and His-60. Residues 286–306 form a helical membrane-spanning segment; it reads VQGLLFFLASVVLAQIFLVLK.

Belongs to the cytochrome f family. In terms of assembly, the 4 large subunits of the cytochrome b6-f complex are cytochrome b6, subunit IV (17 kDa polypeptide, petD), cytochrome f and the Rieske protein, while the 4 small subunits are PetG, PetL, PetM and PetN. The complex functions as a dimer. Heme is required as a cofactor.

The protein resides in the plastid. The protein localises to the chloroplast thylakoid membrane. Its function is as follows. Component of the cytochrome b6-f complex, which mediates electron transfer between photosystem II (PSII) and photosystem I (PSI), cyclic electron flow around PSI, and state transitions. The sequence is that of Cytochrome f from Citrus sinensis (Sweet orange).